The chain runs to 220 residues: CRIB domain-containing protein RIC3 (220 aa).

Residues 28-41 form the CRIB domain; that stretch reads IGFPTDVKHVAHIG. The interval 39 to 220 is disordered; it reads HIGSDGPATN…CNDNNISDKE (182 aa). A compositionally biased stretch (polar residues) spans 61–77; the sequence is NENGQVVSRADANNNQI. A compositionally biased stretch (low complexity) spans 108-121; that stretch reads NGSPPRRNSSASAS. Composition is skewed to basic residues over residues 127-136 and 172-184; these read NTRRHHRSRH and HSRK…RKPK. Polar residues predominate over residues 209–220; that stretch reads DTCNDNNISDKE.

In terms of assembly, interacts with ARAC11/ROP1. As to expression, expressed in flowers and pollen.

It is found in the cytoplasm. Functionally, functions as a downstream effector of Rho-related GTP binding proteins of the 'Rho of Plants' (ROPs) family. Participates in the propagation of ROP GTPase signals in specific cellular responses. Functions as a downstream effector of ARAC11/ROP1 to activate calcium signaling that leads to F-actin disassembly associated with exocytosis in the tip of the growing pollen tube. Counteracts the ARAC11/ROP1-RIC4 pathway, which promotes apical F-actin assembly associated with vesicle accumulation, to control actin dynamics and pollen tube apical growth. The chain is CRIB domain-containing protein RIC3 (RIC3) from Arabidopsis thaliana (Mouse-ear cress).